The primary structure comprises 254 residues: Cell wall biogenesis protein NCW2 (254 aa).

The signal sequence occupies residues 1–17; that stretch reads MKACSILFTTLITLAAA. 3 disordered regions span residues 19–57, 111–143, and 167–191; these read KDSG…SAST, TSTA…DGPV, and ATTD…SSTK. The span at 27-42 shows a compositional bias: low complexity; the sequence is QNSEDSSQKESSNSQE. Over residues 43 to 57 the composition is skewed to polar residues; the sequence is ITPTTTKEAQESAST. The span at 111-139 shows a compositional bias: low complexity; sequence TSTASVQPTGETSSGITNSASSSTTSTST. The N-linked (GlcNAc...) asparagine glycan is linked to N229. The GPI-anchor amidated asparagine moiety is linked to residue N232. The propeptide at 233-254 is removed in mature form; that stretch reads GAFAGTHIAYGAGAFAVGALLL.

Its subcellular location is the cell membrane. Cell wall biogenesis protein that participates in the organization of the beta-glucan assembly. Involved in the mechanism responsible for cell tolerance to polyhexamethylene biguanide (PHMB), an antifungal agent. This is Cell wall biogenesis protein NCW2 from Saccharomyces cerevisiae (strain ATCC 204508 / S288c) (Baker's yeast).